The primary structure comprises 210 residues: Glutathione S-transferase P (210 aa).

One can recognise a GST N-terminal domain in the interval 2–81; the sequence is PPYTIVYFPV…HLGRSLGLYG (80 aa). Y4 bears the Phosphotyrosine; by EGFR mark. Glutathione is bound by residues Y8, R14, W39, K45, and 52–53; that span reads QL. The residue at position 62 (T62) is a Phosphothreonine. 65 to 66 is a glutathione binding site; the sequence is QS. The 122-residue stretch at 83–204 folds into the GST C-terminal domain; it reads DQREAALVDM…SSPDHVNRPI (122 aa). N6-succinyllysine occurs at positions 103 and 116. K128 carries the post-translational modification N6-acetyllysine.

This sequence belongs to the GST superfamily. Pi family. In terms of assembly, homodimer. Interacts with CDK5.

Its subcellular location is the cytoplasm. The protein resides in the mitochondrion. The protein localises to the nucleus. The enzyme catalyses RX + glutathione = an S-substituted glutathione + a halide anion + H(+). It catalyses the reaction prostaglandin J2 + glutathione = prostaglandin J2-S-(R)-glutathione. The catalysed reaction is prostaglandin J2 + glutathione = prostaglandin J2-S-(S)-glutathione. It carries out the reaction prostaglandin A2 + glutathione = prostaglandin A2-S-(S)-glutathione. The enzyme catalyses 11(S)-hydroxy-14(S),15(S)-epoxy-(5Z,8Z,12E)-eicosatrienoate + glutathione = (11S,15S)-dihydroxy-14(R)-S-glutathionyl-(5Z,8Z,12E)-eicosatrienoate. In terms of biological role, conjugation of reduced glutathione to a wide number of exogenous and endogenous hydrophobic electrophiles. Involved in the formation of glutathione conjugates of both prostaglandin A2 (PGA2) and prostaglandin J2 (PGJ2). Participates in the formation of novel hepoxilin regioisomers. Negatively regulates CDK5 activity via p25/p35 translocation to prevent neurodegeneration. The chain is Glutathione S-transferase P (GSTP1) from Cricetulus longicaudatus (Long-tailed dwarf hamster).